Reading from the N-terminus, the 746-residue chain is Polyribonucleotide nucleotidyltransferase (746 aa).

Residues Asp-490 and Asp-496 each coordinate Mg(2+). Residues 557 to 619 (PRIETMIIGK…ATIDAAVKAI (63 aa)) form the KH domain. In terms of domain architecture, S1 motif spans 629–699 (GEVYEGKISS…KTGKFKLSRK (71 aa)). Residues 701-746 (LLPKPEGYEERPPRPERGERGPRQDRGDRGPRQDRGDRGPRREYRD) form a disordered region. The span at 706–746 (EGYEERPPRPERGERGPRQDRGDRGPRQDRGDRGPRREYRD) shows a compositional bias: basic and acidic residues.

This sequence belongs to the polyribonucleotide nucleotidyltransferase family. The cofactor is Mg(2+).

The protein localises to the cytoplasm. It catalyses the reaction RNA(n+1) + phosphate = RNA(n) + a ribonucleoside 5'-diphosphate. In terms of biological role, involved in mRNA degradation. Catalyzes the phosphorolysis of single-stranded polyribonucleotides processively in the 3'- to 5'-direction. The chain is Polyribonucleotide nucleotidyltransferase from Parabacteroides distasonis (strain ATCC 8503 / DSM 20701 / CIP 104284 / JCM 5825 / NCTC 11152).